The chain runs to 373 residues: Transaldolase (373 aa).

The active-site Schiff-base intermediate with substrate is the Lys143.

The protein belongs to the transaldolase family. Type 2 subfamily.

The protein localises to the cytoplasm. It carries out the reaction D-sedoheptulose 7-phosphate + D-glyceraldehyde 3-phosphate = D-erythrose 4-phosphate + beta-D-fructose 6-phosphate. Its pathway is carbohydrate degradation; pentose phosphate pathway; D-glyceraldehyde 3-phosphate and beta-D-fructose 6-phosphate from D-ribose 5-phosphate and D-xylulose 5-phosphate (non-oxidative stage): step 2/3. Functionally, transaldolase is important for the balance of metabolites in the pentose-phosphate pathway. This Mycobacterium ulcerans (strain Agy99) protein is Transaldolase.